The following is a 441-amino-acid chain: uncharacterized protein (441 aa).

Residue 78–85 (GPRQAGKT) coordinates ATP.

This is an uncharacterized protein from Mycobacterium bovis (strain ATCC BAA-935 / AF2122/97).